An 804-amino-acid polypeptide reads, in one-letter code: DEP domain-containing protein 1A (804 aa).

One can recognise a DEP domain in the interval 24 to 108; the sequence is FRVGMPLRKH…DNNQLFRFPA (85 aa). Positions 282–322 constitute a Rho-GAP domain; the sequence is DYFLNLPEPLLTFEYYELFVNILVVCGYITVSDRTSGIHKI. Serine 513 bears the Phosphoserine mark. Residues 592 to 647 are interaction with ZNF224; it reads AINALQLCCLLLPPPNRRKLQLLMRMISRMSQNVDMPKLHEQIGTRSLMINTFSRC. A coiled-coil region spans residues 726 to 760; sequence EQKISTSQAAIAELLENIVRSKSLSLKEKRRKLKQ.

In terms of assembly, can form dimers. Interacts with ZNF224.

The protein localises to the nucleus. May be involved in transcriptional regulation as a transcriptional corepressor. The DEPDC1A-ZNF224 complex may play a critical role in bladder carcinogenesis by repressing the transcription of the A20 gene, leading to transport of NF-KB protein into the nucleus, resulting in suppression of apoptosis of bladder cancer cells. The protein is DEP domain-containing protein 1A (Depdc1a) of Mus musculus (Mouse).